The sequence spans 393 residues: Glutamate 5-kinase (393 aa).

Lysine 17 contributes to the ATP binding site. Residues serine 57, aspartate 144, and asparagine 156 each coordinate substrate. 176 to 177 (SD) is an ATP binding site. Positions 282–359 (AGSIAIDAGA…AEIAAILGYA (78 aa)) constitute a PUA domain. Positions 374–393 (APSGARSEEGGNEKKGKLHA) are disordered. Over residues 379-393 (RSEEGGNEKKGKLHA) the composition is skewed to basic and acidic residues.

The protein belongs to the glutamate 5-kinase family.

The protein localises to the cytoplasm. It carries out the reaction L-glutamate + ATP = L-glutamyl 5-phosphate + ADP. The protein operates within amino-acid biosynthesis; L-proline biosynthesis; L-glutamate 5-semialdehyde from L-glutamate: step 1/2. Catalyzes the transfer of a phosphate group to glutamate to form L-glutamate 5-phosphate. The chain is Glutamate 5-kinase from Sinorhizobium fredii (strain NBRC 101917 / NGR234).